The sequence spans 336 residues: Heme A synthase (336 aa).

The next 5 membrane-spanning stretches (helical) occupy residues 5–25 (LTRWLLTCCIMVVAMIIVGGI), 92–112 (GRATGLIYILPLIYFYFKGII), 117–137 (ILSYIIVLLLFCVQGFMGWYM), 153–173 (LAFHLIIAVIIYHLLFYKLVK), and 191–211 (LIFSVAAIAMIYVQIFLGALV). A heme-binding site is contributed by H255. 3 helical membrane passes run 257 to 277 (LGAYSLSIIVIALIISLLKVK), 284 to 304 (VAFYLSIALLIQLSTGVITLL), and 307 to 327 (VPIIAASMHQFFAIVLLSVVI). Residue H315 coordinates heme.

It belongs to the COX15/CtaA family. Type 2 subfamily. In terms of assembly, interacts with CtaB. Requires heme b as cofactor.

It localises to the cell membrane. The catalysed reaction is Fe(II)-heme o + 2 A + H2O = Fe(II)-heme a + 2 AH2. It functions in the pathway porphyrin-containing compound metabolism; heme A biosynthesis; heme A from heme O: step 1/1. Functionally, catalyzes the conversion of heme O to heme A by two successive hydroxylations of the methyl group at C8. The first hydroxylation forms heme I, the second hydroxylation results in an unstable dihydroxymethyl group, which spontaneously dehydrates, resulting in the formyl group of heme A. In Rickettsia bellii (strain OSU 85-389), this protein is Heme A synthase.